The sequence spans 249 residues: Large ribosomal subunit protein uL4 (249 aa).

The protein belongs to the universal ribosomal protein uL4 family. Part of the 50S ribosomal subunit.

In terms of biological role, one of the primary rRNA binding proteins, this protein initially binds near the 5'-end of the 23S rRNA. It is important during the early stages of 50S assembly. It makes multiple contacts with different domains of the 23S rRNA in the assembled 50S subunit and ribosome. Functionally, forms part of the polypeptide exit tunnel. The chain is Large ribosomal subunit protein uL4 from Methanospirillum hungatei JF-1 (strain ATCC 27890 / DSM 864 / NBRC 100397 / JF-1).